We begin with the raw amino-acid sequence, 376 residues long: 5-hydroxytryptamine receptor 1D (376 aa).

Positions 1–22 (MSPPNQSEEGLPQEASNRSLNA) are disordered. 3 N-linked (GlcNAc...) asparagine glycosylation sites follow: Asn5, Asn17, and Asn21. The next 3 helical transmembrane spans lie at 39–64 (VSLVVVLSIITLATVLSNAFVLTTIL), 76–97 (LIGSLATTDLLVSILVMPISIA), and 110–134 (LCDIWVSSDITCCTASILHLCVIAL). A disulfide bridge connects residues Cys111 and Cys188. Positions 118 and 122 each coordinate serotonin. The DRY motif; important for ligand-induced conformation changes signature appears at 135-137 (DRY). Helical transmembrane passes span 155-176 (AGAMIAAVWVISICISIPPLFW), 195-218 (ISYTIYSTCGAFYIPSVLLIILYS), 300-325 (KTLGIILGAFIVCWLPFFVVSLVLPI), and 335-358 (ALFDFFTWLGYLNSLINPIIYTVF). Ser320 provides a ligand contact to serotonin. The NPxxY motif; important for ligand-induced conformation changes and signaling signature appears at 351 to 355 (NPIIY).

The protein belongs to the G-protein coupled receptor 1 family. As to quaternary structure, homodimer. Heterodimer with HTR1B.

It is found in the cell membrane. Functionally, G-protein coupled receptor for 5-hydroxytryptamine (serotonin). Also functions as a receptor for ergot alkaloid derivatives, various anxiolytic and antidepressant drugs and other psychoactive substances. Ligand binding causes a conformation change that triggers signaling via guanine nucleotide-binding proteins (G proteins) and modulates the activity of downstream effectors, such as adenylate cyclase. HTR1D is coupled to G(i)/G(o) G alpha proteins and mediates inhibitory neurotransmission by inhibiting adenylate cyclase activity. Regulates the release of 5-hydroxytryptamine in the brain, and thereby affects neural activity. May also play a role in regulating the release of other neurotransmitters. May play a role in vasoconstriction. The chain is 5-hydroxytryptamine receptor 1D (HTR1D) from Cavia porcellus (Guinea pig).